Consider the following 519-residue polypeptide: Tetratricopeptide repeat protein 31 (519 aa).

A coiled-coil region spans residues 147–197; it reads QKLLVTEEEANRLAEELVAEEERMKQKAEKKRLKKKRQKERKRQERLEQYC. A compositionally biased stretch (basic residues) spans 175–187; sequence EKKRLKKKRQKER. Disordered regions lie at residues 175–230 and 253–294; these read EKKR…EEDS and RREK…VQAS. Serine 278 is subject to Phosphoserine. 3 TPR repeats span residues 305 to 338, 339 to 372, and 373 to 406; these read SQELAKLGTSFAQNGFYHEAVVLFTQALKLNPQD, HRLFGNRSFCHERLGQPAWALADAQVALTLRPGW, and PRGLFRLGKALMGLQRFREAAAVFQETLRGGSQP. Residues 474–506 are disordered; the sequence is PSCHRSHPNQPLSQTQSRRPHPLKPQDPSKGWD. Polar residues predominate over residues 481 to 490; the sequence is PNQPLSQTQS.

The sequence is that of Tetratricopeptide repeat protein 31 (TTC31) from Homo sapiens (Human).